Consider the following 239-residue polypeptide: Geranylgeranylglyceryl phosphate synthase (239 aa).

Mg(2+)-binding residues include Asp19 and Ser48. Residues 167-173 (YLEAGSG), 197-198 (GG), and 219-220 (GT) contribute to the sn-glycerol 1-phosphate site.

It belongs to the GGGP/HepGP synthase family. Group II subfamily. The cofactor is Mg(2+).

It is found in the cytoplasm. It carries out the reaction sn-glycerol 1-phosphate + (2E,6E,10E)-geranylgeranyl diphosphate = sn-3-O-(geranylgeranyl)glycerol 1-phosphate + diphosphate. It participates in membrane lipid metabolism; glycerophospholipid metabolism. Its function is as follows. Prenyltransferase that catalyzes the transfer of the geranylgeranyl moiety of geranylgeranyl diphosphate (GGPP) to the C3 hydroxyl of sn-glycerol-1-phosphate (G1P). This reaction is the first ether-bond-formation step in the biosynthesis of archaeal membrane lipids. The polypeptide is Geranylgeranylglyceryl phosphate synthase (Methanopyrus kandleri (strain AV19 / DSM 6324 / JCM 9639 / NBRC 100938)).